Reading from the N-terminus, the 397-residue chain is ATP phosphoribosyltransferase regulatory subunit (397 aa).

Belongs to the class-II aminoacyl-tRNA synthetase family. HisZ subfamily. In terms of assembly, heteromultimer composed of HisG and HisZ subunits.

The protein resides in the cytoplasm. Its pathway is amino-acid biosynthesis; L-histidine biosynthesis; L-histidine from 5-phospho-alpha-D-ribose 1-diphosphate: step 1/9. In terms of biological role, required for the first step of histidine biosynthesis. May allow the feedback regulation of ATP phosphoribosyltransferase activity by histidine. This is ATP phosphoribosyltransferase regulatory subunit from Halalkalibacterium halodurans (strain ATCC BAA-125 / DSM 18197 / FERM 7344 / JCM 9153 / C-125) (Bacillus halodurans).